The chain runs to 600 residues: Elongation factor 4 (600 aa).

A tr-type G domain is found at 5–187 (SHIRNFSIVA…ALVNRLPCPE (183 aa)). GTP contacts are provided by residues 17-22 (DHGKST) and 134-137 (NKID).

This sequence belongs to the TRAFAC class translation factor GTPase superfamily. Classic translation factor GTPase family. LepA subfamily.

The protein resides in the cell inner membrane. It catalyses the reaction GTP + H2O = GDP + phosphate + H(+). Functionally, required for accurate and efficient protein synthesis under certain stress conditions. May act as a fidelity factor of the translation reaction, by catalyzing a one-codon backward translocation of tRNAs on improperly translocated ribosomes. Back-translocation proceeds from a post-translocation (POST) complex to a pre-translocation (PRE) complex, thus giving elongation factor G a second chance to translocate the tRNAs correctly. Binds to ribosomes in a GTP-dependent manner. The chain is Elongation factor 4 from Paramagnetospirillum magneticum (strain ATCC 700264 / AMB-1) (Magnetospirillum magneticum).